Here is a 311-residue protein sequence, read N- to C-terminus: Ornithine carbamoyltransferase (311 aa).

Residues Gln-85, Arg-109, and 136-139 contribute to the carbamoyl phosphate site; that span reads HPCQ. Residues Asn-167, Asp-231, and 235–236 contribute to the L-ornithine site; that span reads SM. Carbamoyl phosphate-binding positions include 271-272 and Arg-299; that span reads CL.

This sequence belongs to the aspartate/ornithine carbamoyltransferase superfamily. OTCase family.

Its subcellular location is the cytoplasm. The enzyme catalyses carbamoyl phosphate + L-ornithine = L-citrulline + phosphate + H(+). It participates in amino-acid biosynthesis; L-arginine biosynthesis; L-arginine from L-ornithine and carbamoyl phosphate: step 1/3. Functionally, reversibly catalyzes the transfer of the carbamoyl group from carbamoyl phosphate (CP) to the N(epsilon) atom of ornithine (ORN) to produce L-citrulline. This chain is Ornithine carbamoyltransferase (argF), found in Geobacillus stearothermophilus (Bacillus stearothermophilus).